Consider the following 510-residue polypeptide: GMP synthase [glutamine-hydrolyzing] (510 aa).

The region spanning 5–195 (LVLVVDFGGQ…LFNVCNLKGD (191 aa)) is the Glutamine amidotransferase type-1 domain. The active-site Nucleophile is cysteine 82. Active-site residues include histidine 169 and glutamate 171. A GMPS ATP-PPase domain is found at 196–385 (WSMSSFAEQQ…LGIPHKLVWR (190 aa)). 223-229 (SGGVDSS) is a binding site for ATP.

In terms of assembly, homodimer.

It catalyses the reaction XMP + L-glutamine + ATP + H2O = GMP + L-glutamate + AMP + diphosphate + 2 H(+). It functions in the pathway purine metabolism; GMP biosynthesis; GMP from XMP (L-Gln route): step 1/1. In terms of biological role, catalyzes the synthesis of GMP from XMP. The protein is GMP synthase [glutamine-hydrolyzing] of Clostridium botulinum (strain Kyoto / Type A2).